A 646-amino-acid chain; its full sequence is Alkyl/aryl-sulfatase BDS1 (646 aa).

N-acetylmethionine is present on M1. 7 residues coordinate Zn(2+): H162, H164, D166, H167, E273, E292, and H337.

Belongs to the metallo-beta-lactamase superfamily. Type III sulfatase family. Zn(2+) serves as cofactor.

Its function is as follows. Alkyl/aryl-sulfatase. Enables the use of SDS and 4-nitrocatechol as sulfur source. In Saccharomyces cerevisiae (strain ATCC 204508 / S288c) (Baker's yeast), this protein is Alkyl/aryl-sulfatase BDS1 (BDS1).